Reading from the N-terminus, the 404-residue chain is Acetate kinase (404 aa).

Asparagine 8 contributes to the Mg(2+) binding site. Residue lysine 15 participates in ATP binding. Arginine 92 contributes to the substrate binding site. Aspartate 149 serves as the catalytic Proton donor/acceptor. Residues 207 to 211, 282 to 284, and 327 to 331 each bind ATP; these read HLGSG, DMR, and GIGEN. Glutamate 378 contacts Mg(2+).

This sequence belongs to the acetokinase family. As to quaternary structure, homodimer. Requires Mg(2+) as cofactor. The cofactor is Mn(2+).

The protein localises to the cytoplasm. The catalysed reaction is acetate + ATP = acetyl phosphate + ADP. It participates in metabolic intermediate biosynthesis; acetyl-CoA biosynthesis; acetyl-CoA from acetate: step 1/2. Its function is as follows. Catalyzes the formation of acetyl phosphate from acetate and ATP. Can also catalyze the reverse reaction. In Nitrobacter hamburgensis (strain DSM 10229 / NCIMB 13809 / X14), this protein is Acetate kinase.